The sequence spans 280 residues: Cytochrome c1 (280 aa).

The N-terminal stretch at 1-21 (MKKLLISAVSALVLGSGAALA) is a signal peptide. 4 residues coordinate heme c: Cys55, Cys58, His59, and Met205. Residues 249–267 (MGLVAVVMLGLLSVMLYLT) traverse the membrane as a helical segment.

In terms of assembly, the main subunits of complex b-c1 are: cytochrome b, cytochrome c1 and the Rieske protein. Post-translationally, binds 1 heme c group covalently per subunit.

The protein resides in the cell membrane. In terms of biological role, component of the ubiquinol-cytochrome c reductase complex (complex III or cytochrome b-c1 complex), which is a respiratory chain that generates an electrochemical potential coupled to ATP synthesis. c1 functions as an electron donor to cytochrome c. The sequence is that of Cytochrome c1 (petC) from Rhodobacter capsulatus (Rhodopseudomonas capsulata).